Consider the following 752-residue polypeptide: Iron-sulfur clusters transporter ABCB7, mitochondrial (752 aa).

A mitochondrion-targeting transit peptide spans 1 to 22; it reads MALLAIHSWRWAAAAVAFEKHK. The Mitochondrial matrix portion of the chain corresponds to 23-140; sequence HSAVLTRSLV…KDRPDLRARV (118 aa). The ABC transmembrane type-1 domain maps to 140 to 436; sequence VAISLGFLGG…LGTVYRETRQ (297 aa). Residues 141–161 form a helical membrane-spanning segment; it reads AISLGFLGGAKAMNIVVPFMF. Topologically, residues 162–185 are mitochondrial intermembrane; the sequence is KYAVDSLNQMSGNMLNLSDAPNTV. The helical transmembrane segment at 186 to 206 threads the bilayer; the sequence is ATMATAVLIGYGVSRAGAAFF. Residues 207-259 lie on the Mitochondrial matrix side of the membrane; the sequence is NEVRNAVFGKVAQNSIRRIAKNVFLHLHNLDLGFHLSRQTGALSKAIDRGTRG. N6-acetyllysine occurs at positions 216 and 251. Residues 260–280 form a helical membrane-spanning segment; sequence ISFVLSALVFNLLPIVFEMTL. The Mitochondrial intermembrane portion of the chain corresponds to 281-290; that stretch reads VSSVLYYKCG. The chain crosses the membrane as a helical span at residues 291 to 311; it reads AQFALVTLGTLGAYTAFTVAV. Residues 312–382 are Mitochondrial matrix-facing; sequence TRWRTRFRIE…TLAMLNFGQS (71 aa). 315 to 319 is a glutathione binding site; sequence RTRFR. Position 336 is a phosphoserine (Ser336). Position 340 is a phosphotyrosine (Tyr340). Thr342 is modified (phosphothreonine). At Lys350 the chain carries N6-acetyllysine. 378-381 provides a ligand contact to glutathione; the sequence is NFGQ. Residues 383–403 form a helical membrane-spanning segment; that stretch reads AIFSVGLTAIMVLASQGIVAG. The Mitochondrial intermembrane portion of the chain corresponds to 404-409; it reads ALTVGD. The chain crosses the membrane as a helical span at residues 410–430; that stretch reads LVMVNGLLFQLSLPLNFLGTV. A glutathione-binding site is contributed by Gly428. Residues 431-752 lie on the Mitochondrial matrix side of the membrane; it reads YRETRQALID…SVKGCGNCSC (322 aa). The region spanning 472–706 is the ABC transporter domain; the sequence is VAFDNVHFEY…SSSIYSEMWH (235 aa). ATP is bound by residues Tyr481 and 505–516; that span reads GGSGSGKSTIVR.

It belongs to the ABC transporter superfamily. ABCB family. Heavy Metal importer (TC 3.A.1.210) subfamily. In terms of assembly, homodimer or heterodimer. Interacts with C10orf88/PAAT. Forms a complex with ABCB10 and FECH, where a dimeric FECH bridges ABCB7 and ABCB10 homodimers; this complex may be required for cellular iron homeostasis, mitochondrial function and heme biosynthesis. Interacts with FECH. Interacts with ATP5F1A. Interacts with COX4I1; this interaction allows the regulation of cellular iron homeostasis and cellular reactive oxygen species (ROS) levels in cardiomyocytes.

It localises to the mitochondrion inner membrane. The catalysed reaction is (glutathione)4[2Fe(III)-2S] cluster(in) + ATP + H2O = (glutathione)4[2Fe(III)-2S] cluster(out) + ADP + phosphate + H(+). In terms of biological role, exports glutathione-coordinated iron-sulfur clusters such as [2Fe-2S]-(GS)4 cluster from the mitochondria to the cytosol in an ATP-dependent manner allowing the assembly of the cytosolic iron-sulfur (Fe/S) cluster-containing proteins and participates in iron homeostasis. Moreover, through a functional complex formed of ABCB7, FECH and ABCB10, also plays a role in the cellular iron homeostasis, mitochondrial function and heme biosynthesis. In cardiomyocytes, regulates cellular iron homeostasis and cellular reactive oxygen species (ROS) levels through its interaction with COX4I1. May also play a role in hematopoiesis. The sequence is that of Iron-sulfur clusters transporter ABCB7, mitochondrial from Rattus norvegicus (Rat).